The following is a 208-amino-acid chain: MTGKKRSASSSRWLHEHFSDKYVQQAQKKGLRSRAWFKLDEIQQSDKLFKPGMTVVDLGAAPGGWSQYVVTQIGGKGRIIACDLLPMDPIVGVDFLQGDFRDELVMKALLERVGDSKVQVVMSDMAPNMSGTPAVDIPRAMYLVELALEMCRDVLAPGGSFVVKVFQGEGFDEYLREIRSLFTKVKVRKPDSSRARSREVYIVATGRK.

Residues Gly63, Trp65, Asp83, Asp99, and Asp124 each coordinate S-adenosyl-L-methionine. Lys164 functions as the Proton acceptor in the catalytic mechanism.

This sequence belongs to the class I-like SAM-binding methyltransferase superfamily. RNA methyltransferase RlmE family.

The protein resides in the cytoplasm. The catalysed reaction is uridine(2552) in 23S rRNA + S-adenosyl-L-methionine = 2'-O-methyluridine(2552) in 23S rRNA + S-adenosyl-L-homocysteine + H(+). Functionally, specifically methylates the uridine in position 2552 of 23S rRNA at the 2'-O position of the ribose in the fully assembled 50S ribosomal subunit. This Salmonella choleraesuis (strain SC-B67) protein is Ribosomal RNA large subunit methyltransferase E.